A 329-amino-acid chain; its full sequence is Methionyl-tRNA formyltransferase (329 aa).

Residue 112–115 (SILP) participates in (6S)-5,6,7,8-tetrahydrofolate binding.

Belongs to the Fmt family.

It carries out the reaction L-methionyl-tRNA(fMet) + (6R)-10-formyltetrahydrofolate = N-formyl-L-methionyl-tRNA(fMet) + (6S)-5,6,7,8-tetrahydrofolate + H(+). Attaches a formyl group to the free amino group of methionyl-tRNA(fMet). The formyl group appears to play a dual role in the initiator identity of N-formylmethionyl-tRNA by promoting its recognition by IF2 and preventing the misappropriation of this tRNA by the elongation apparatus. The chain is Methionyl-tRNA formyltransferase from Shewanella sediminis (strain HAW-EB3).